The primary structure comprises 190 residues: CASP-like protein 5A3 (190 aa).

Composition is skewed to low complexity over residues 1-12 and 20-31; these read MRASRPAVHPVE and AAAEGPEAQVEG. The interval 1-31 is disordered; that stretch reads MRASRPAVHPVEAAPPPPAAAAEGPEAQVEG. Topologically, residues 1–50 are cytoplasmic; sequence MRASRPAVHPVEAAPPPPAAAAEGPEAQVEGAAHPRGVRMKDPPGAPGTP. A helical membrane pass occupies residues 51 to 71; the sequence is AGLGLRLAQAFFAAAALAVMA. At 72–81 the chain is on the extracellular side; it reads STNDFPSVSA. A helical membrane pass occupies residues 82–102; the sequence is FSYLVAAAILQCLWSLLLAFV. The Cytoplasmic portion of the chain corresponds to 103–126; the sequence is DIYALLVKRSLRNARAVCIFTIGD. Residues 127–147 traverse the membrane as a helical segment; the sequence is GITGTITLGAACASAGITVLI. Over 148–164 the chain is Extracellular; it reads GNDLNICAENHCASFET. A helical membrane pass occupies residues 165 to 185; the sequence is ATALAFISWFALAPSCILNFW. At 186–190 the chain is on the cytoplasmic side; that stretch reads SMASR.

It belongs to the Casparian strip membrane proteins (CASP) family. Homodimer and heterodimers.

The protein localises to the cell membrane. This is CASP-like protein 5A3 from Zea mays (Maize).